A 208-amino-acid chain; its full sequence is dITP/XTP pyrophosphatase (208 aa).

15–20 (SHNAGK) lines the substrate pocket. Residues Glu-47 and Asp-76 each coordinate Mg(2+). Residue Asp-76 is the Proton acceptor of the active site. Substrate contacts are provided by residues Ser-77, 157–160 (HGYD), Lys-180, and 185–186 (HR).

This sequence belongs to the HAM1 NTPase family. In terms of assembly, homodimer. It depends on Mg(2+) as a cofactor.

The catalysed reaction is XTP + H2O = XMP + diphosphate + H(+). The enzyme catalyses dITP + H2O = dIMP + diphosphate + H(+). It catalyses the reaction ITP + H2O = IMP + diphosphate + H(+). In terms of biological role, pyrophosphatase that catalyzes the hydrolysis of nucleoside triphosphates to their monophosphate derivatives, with a high preference for the non-canonical purine nucleotides XTP (xanthosine triphosphate), dITP (deoxyinosine triphosphate) and ITP. Seems to function as a house-cleaning enzyme that removes non-canonical purine nucleotides from the nucleotide pool, thus preventing their incorporation into DNA/RNA and avoiding chromosomal lesions. The protein is dITP/XTP pyrophosphatase of Gluconobacter oxydans (strain 621H) (Gluconobacter suboxydans).